The following is a 418-amino-acid chain: 3-isopropylmalate dehydratase large subunit 1 (418 aa).

Residues cysteine 298, cysteine 358, and cysteine 361 each contribute to the [4Fe-4S] cluster site.

This sequence belongs to the aconitase/IPM isomerase family. LeuC type 2 subfamily. As to quaternary structure, heterodimer of LeuC and LeuD. It depends on [4Fe-4S] cluster as a cofactor.

It carries out the reaction (2R,3S)-3-isopropylmalate = (2S)-2-isopropylmalate. It participates in amino-acid biosynthesis; L-leucine biosynthesis; L-leucine from 3-methyl-2-oxobutanoate: step 2/4. Catalyzes the isomerization between 2-isopropylmalate and 3-isopropylmalate, via the formation of 2-isopropylmaleate. The protein is 3-isopropylmalate dehydratase large subunit 1 of Methanopyrus kandleri (strain AV19 / DSM 6324 / JCM 9639 / NBRC 100938).